A 516-amino-acid chain; its full sequence is MSAKKPVVLLILDGYGYSERTKYNAVYAAQTPVYDNLWKTCPNTLIDTSGMAVGLPAGQMGNSEVGHTTIGAGRVVYQSFTRINKSISDGDFFTNPEYVKAIDSAIANDRAVHILGLLSEGGVHSHQDHLYAMINMAVERGAKQVYLHAFLDGRDTPPRSAEASLQKAQDVFAKLGTGRVASIVGRYFALDRDNRWDRVKTAYDVMVTGEAEFDALTAVDGLKAAYERGENDEFVKATVICGEDEEVATINDGDSVIFMNFRPDRAREITRALIDENFTGFDRGETHPAIAHFVQTTEYASDIKAPIAFPPEDLSNSFGEYIAGLGKTQLRIAETEKYAHVTFFFNGGNEVVYPGEDRILVPSPKVATYDLQPEMSAPEVTDKLVEAIESGKYDAIICNYANCDMVGHSGLFDAAVKAVEAVDVALGRVLAAVKKVDGEALITADHGNVEEMFDEETGQPHTQHSTLPVPFIFVSSRKGKLASGGSLADVAPTILALMDLPQPKEMTGRNLITLEG.

Mn(2+) contacts are provided by aspartate 13 and serine 63. Residue serine 63 is the Phosphoserine intermediate of the active site. Substrate contacts are provided by residues histidine 124, 154–155, arginine 186, arginine 192, 262–265, and lysine 337; these read RD and RPDR. The Mn(2+) site is built by aspartate 404, histidine 408, aspartate 445, histidine 446, and histidine 464.

Belongs to the BPG-independent phosphoglycerate mutase family. As to quaternary structure, monomer. Mn(2+) is required as a cofactor.

It catalyses the reaction (2R)-2-phosphoglycerate = (2R)-3-phosphoglycerate. It functions in the pathway carbohydrate degradation; glycolysis; pyruvate from D-glyceraldehyde 3-phosphate: step 3/5. Catalyzes the interconversion of 2-phosphoglycerate and 3-phosphoglycerate. This Cellvibrio japonicus (strain Ueda107) (Pseudomonas fluorescens subsp. cellulosa) protein is 2,3-bisphosphoglycerate-independent phosphoglycerate mutase.